Consider the following 343-residue polypeptide: 2-deoxy-scyllo-inosamine dehydrogenase (343 aa).

Zn(2+) is bound by residues Cys-37, His-59, Cys-91, Cys-94, Cys-97, Cys-105, and Glu-146.

This sequence belongs to the zinc-containing alcohol dehydrogenase family. DOIA dehydrogenase subfamily. Zn(2+) is required as a cofactor.

It catalyses the reaction 2-deoxy-scyllo-inosamine + NADP(+) = 3-amino-2,3-dideoxy-scyllo-inosose + NADPH + H(+). The enzyme catalyses 2-deoxy-scyllo-inosamine + NAD(+) = 3-amino-2,3-dideoxy-scyllo-inosose + NADH + H(+). It functions in the pathway metabolic intermediate biosynthesis; 2-deoxystreptamine biosynthesis; 2-deoxystreptamine from D-glucose 6-phosphate: step 3/4. Its pathway is antibiotic biosynthesis; kanamycin biosynthesis. Its function is as follows. Catalyzes the oxidation of 2-deoxy-scyllo-inosamine (DOIA) with NAD(+) or NADP(+), forming 3-amino-2,3-dideoxy-scyllo-inosose (amino-DOI). In Streptomyces kanamyceticus, this protein is 2-deoxy-scyllo-inosamine dehydrogenase (kanE).